We begin with the raw amino-acid sequence, 170 residues long: Ribosome maturation factor RimM (170 aa).

The PRC barrel domain occupies 97–170 (KNEFYWTDLI…QIRVEWGSDW (74 aa)).

This sequence belongs to the RimM family. As to quaternary structure, binds ribosomal protein uS19.

It localises to the cytoplasm. In terms of biological role, an accessory protein needed during the final step in the assembly of 30S ribosomal subunit, possibly for assembly of the head region. Essential for efficient processing of 16S rRNA. May be needed both before and after RbfA during the maturation of 16S rRNA. It has affinity for free ribosomal 30S subunits but not for 70S ribosomes. The chain is Ribosome maturation factor RimM from Dechloromonas aromatica (strain RCB).